Here is a 137-residue protein sequence, read N- to C-terminus: Insulin-like peptide 2 (137 aa).

Residues 1–26 form the signal peptide; sequence MSKPLSFISMVAVILLASSTVKLAQG. 3 cysteine pairs are disulfide-bonded: C29/C119, C41/C132, and C118/C123. A propeptide spans 53 to 104 (connecting peptide); it reads AMPGADSDLDALNPLQFVQEFEEEDNSISEPLRSALFPGSYLGGVLNSLAEV.

This sequence belongs to the insulin family. In terms of assembly, heterodimer of a B chain and an A chain linked by two disulfide bonds. As to expression, broadly expressed at a low level in the embryonic mesoderm, beginning at stage 12. Expressed at a high level in the embryonic anterior midgut, with expression diminishing at late stage 16. Expressed at a low level in larval imaginal disks. Expressed at a high level in larval salivary glands and in seven cells of each larval brain hemisphere that may correspond to neurosecretory cells.

The protein localises to the secreted. Functionally, possible ligand of InR/insulin-like receptor. Its function is as follows. Plays a role in regulating body size by increasing cell size and cell number of individual organs. Probably mediates its growth effects by acting as a ligand for the insulin receptor and transducing a signal via the Chico/PI3K/Akt(PKB) pathway. This chain is Insulin-like peptide 2, found in Drosophila melanogaster (Fruit fly).